A 126-amino-acid polypeptide reads, in one-letter code: Fluoride-specific ion channel FluC 1 (126 aa).

4 consecutive transmembrane segments (helical) span residues 1-21 (MAGS…GAWL), 38-58 (WGTF…LALY), 67-87 (LALL…TFAV), and 99-119 (FVSL…AGVG). Na(+) contacts are provided by G77 and S80.

The protein belongs to the fluoride channel Fluc/FEX (TC 1.A.43) family.

The protein localises to the cell inner membrane. It catalyses the reaction fluoride(in) = fluoride(out). With respect to regulation, na(+) is not transported, but it plays an essential structural role and its presence is essential for fluoride channel function. Functionally, fluoride-specific ion channel. Important for reducing fluoride concentration in the cell, thus reducing its toxicity. The polypeptide is Fluoride-specific ion channel FluC 1 (Synechococcus sp. (strain CC9902)).